Consider the following 433-residue polypeptide: Glutamate-1-semialdehyde 2,1-aminomutase (433 aa).

The residue at position 266 (Lys266) is an N6-(pyridoxal phosphate)lysine.

Belongs to the class-III pyridoxal-phosphate-dependent aminotransferase family. HemL subfamily. In terms of assembly, homodimer. Pyridoxal 5'-phosphate is required as a cofactor.

It localises to the cytoplasm. It carries out the reaction (S)-4-amino-5-oxopentanoate = 5-aminolevulinate. It participates in porphyrin-containing compound metabolism; protoporphyrin-IX biosynthesis; 5-aminolevulinate from L-glutamyl-tRNA(Glu): step 2/2. This chain is Glutamate-1-semialdehyde 2,1-aminomutase, found in Psychrobacter arcticus (strain DSM 17307 / VKM B-2377 / 273-4).